Reading from the N-terminus, the 224-residue chain is Adenylate kinase (224 aa).

Position 10–15 (10–15) interacts with ATP; sequence GSGKGT. Residues 30–59 form an NMP region; the sequence is ESGAIFRDNIKGGTDLGMKAKAYIDKGDLV. Residues Ser-31, Arg-36, 57–59, 85–88, and Gln-92 each bind AMP; these read DLV and GFPR. The LID stretch occupies residues 126 to 165; it reads GRRLCENDNNHPNNIFIDAIKPNGDKCRVCGGALSSRADD. An ATP-binding site is contributed by Arg-127. Arg-162 and Arg-174 together coordinate AMP. Asn-211 is a binding site for ATP.

The protein belongs to the adenylate kinase family. In terms of assembly, monomer.

Its subcellular location is the cytoplasm. The catalysed reaction is AMP + ATP = 2 ADP. It functions in the pathway purine metabolism; AMP biosynthesis via salvage pathway; AMP from ADP: step 1/1. Its function is as follows. Catalyzes the reversible transfer of the terminal phosphate group between ATP and AMP. Plays an important role in cellular energy homeostasis and in adenine nucleotide metabolism. This is Adenylate kinase from Desulforapulum autotrophicum (strain ATCC 43914 / DSM 3382 / VKM B-1955 / HRM2) (Desulfobacterium autotrophicum).